A 220-amino-acid chain; its full sequence is tRNA (guanine-N(7)-)-methyltransferase (220 aa).

3 residues coordinate S-adenosyl-L-methionine: glutamate 42, glutamate 67, and aspartate 122. The active site involves aspartate 122. Substrate contacts are provided by residues lysine 126, aspartate 158, and 198–201 (TEYE).

This sequence belongs to the class I-like SAM-binding methyltransferase superfamily. TrmB family.

It catalyses the reaction guanosine(46) in tRNA + S-adenosyl-L-methionine = N(7)-methylguanosine(46) in tRNA + S-adenosyl-L-homocysteine. It participates in tRNA modification; N(7)-methylguanine-tRNA biosynthesis. In terms of biological role, catalyzes the formation of N(7)-methylguanine at position 46 (m7G46) in tRNA. In Mycoplasma capricolum subsp. capricolum (strain California kid / ATCC 27343 / NCTC 10154), this protein is tRNA (guanine-N(7)-)-methyltransferase.